Consider the following 214-residue polypeptide: Putative ras-related protein Rab-5B (214 aa).

A GTP-binding site is contributed by 56–63 (GEMNTGKT). Positions 77-85 (TDSTIGAAF) match the Effector region motif. GTP is bound by residues 103–107 (DTAGQ) and 161–164 (NKVD).

The protein belongs to the small GTPase superfamily. Rab family. Post-translationally, this sequence lacks the C-terminal cysteine motifs subject to isoprenylation in other Rab proteins.

This chain is Putative ras-related protein Rab-5B (rab5B), found in Dictyostelium discoideum (Social amoeba).